Reading from the N-terminus, the 285-residue chain is Trypsin Tyr p 3.0101 (285 aa).

A signal peptide spans 1 to 16 (MKILLFLCFLVSVAFA). The propeptide occupies 17 to 33 (KPPTIQLKSNTKSQNGF). One can recognise a Peptidase S1 domain in the interval 34–262 (IVGGTEAVDG…YLDWIELSAK (229 aa)). Residues cysteine 58 and cysteine 74 are joined by a disulfide bond. Catalysis depends on charge relay system residues histidine 73 and aspartate 120. 2 cysteine pairs are disulfide-bonded: cysteine 186–cysteine 202 and cysteine 214–cysteine 238. Catalysis depends on serine 218, which acts as the Charge relay system.

Belongs to the peptidase S1 family.

The protein resides in the secreted. The catalysed reaction is Preferential cleavage: Arg-|-Xaa, Lys-|-Xaa.. Inhibited by the serine protease inhibitor phenylmethylsulfonyl, and trypsin inhibitors soybean trypsin inhibitor and tosyllysine chloromethyl ketone. Not inhibited by dithiothreitol, a cysteine protease inhibitor. Its function is as follows. Digests TAMe (p-toluene arginine methyl ester), but not ethyl N-benzoyl-L-tyrosinate (BTEE). In Tyrophagus putrescentiae (Mold mite), this protein is Trypsin Tyr p 3.0101.